Reading from the N-terminus, the 550-residue chain is Hydroxylamine reductase (550 aa).

Residues Cys3, Cys6, Cys18, and Cys25 each contribute to the [2Fe-2S] cluster site. Positions 249, 273, 317, 405, 433, 458, 492, and 494 each coordinate hybrid [4Fe-2O-2S] cluster. Cys405 bears the Cysteine persulfide mark.

This sequence belongs to the HCP family. Requires [2Fe-2S] cluster as cofactor. Hybrid [4Fe-2O-2S] cluster serves as cofactor.

Its subcellular location is the cytoplasm. It carries out the reaction A + NH4(+) + H2O = hydroxylamine + AH2 + H(+). Catalyzes the reduction of hydroxylamine to form NH(3) and H(2)O. In Salmonella enteritidis PT4 (strain P125109), this protein is Hydroxylamine reductase.